The following is a 347-amino-acid chain: Tsukushi (347 aa).

The first 19 residues, 1–19 (MASLLCLFFSLLGLAAIGA), serve as a signal peptide directing secretion. The 42-residue stretch at 20-61 (VKNCHPQCRCEVETFGLFDSFSLTKVDCSRIGPGNTPVPIPL) folds into the LRRNT domain. 10 LRR repeats span residues 62 to 83 (DTSH…MLSG), 88 to 109 (TLVS…AFSK), 112 to 133 (YLET…CFTG), 135 to 156 (PLVE…LFTT), 160 to 175 (DLPI…LTSI), 185 to 205 (YIKS…LNGI), 206 to 227 (PLQY…AFDS), 230 to 252 (ELVH…AFRS), 255 to 277 (NLQA…VFSG), and 280 to 301 (SLQE…VFMQ). The N-linked (GlcNAc...) asparagine glycan is linked to Asn-285.

As to quaternary structure, forms a ternary complex with chordin/CHRD and BMP4.

It localises to the secreted. In terms of biological role, contributes to various developmental events through its interactions with multiple signaling pathways. Dorsalizing factor which functions as an inhibitor of bone morphogenetic proteins during gastrulation. This Danio rerio (Zebrafish) protein is Tsukushi (tsku).